Consider the following 31-residue polypeptide: GDCSCEGQICKCGYRVSPGKSGCACTCRNAK.

Belongs to the conotoxin S superfamily. Post-translationally, contains 5 disulfide bonds. In terms of tissue distribution, expressed by the venom duct.

The protein resides in the secreted. The chain is Conotoxin from Conus striatus (Striated cone).